Here is a 228-residue protein sequence, read N- to C-terminus: Cytochrome c oxidase subunit 2 (228 aa).

At 1–26 (MSQWFQLGLQNGNSPLMEQLIFFHDH) the chain is on the mitochondrial intermembrane side. Residues 27–48 (ALLVVILITSLVGFFLAALFSN) traverse the membrane as a helical segment. Over 49–62 (KFLHRYLLDGQAIE) the chain is Mitochondrial matrix. Residues 63–82 (TVWTVIPAIILVAIALPSIR) traverse the membrane as a helical segment. Residues 83–228 (LLYLIDEIHN…FLKWLELQIS (146 aa)) lie on the Mitochondrial intermembrane side of the membrane. His-161, Cys-196, Glu-198, Cys-200, His-204, and Met-207 together coordinate Cu cation. Glu-198 serves as a coordination point for Mg(2+).

The protein belongs to the cytochrome c oxidase subunit 2 family. As to quaternary structure, component of the cytochrome c oxidase (complex IV, CIV), a multisubunit enzyme composed of a catalytic core of 3 subunits and several supernumerary subunits. The complex exists as a monomer or a dimer and forms supercomplexes (SCs) in the inner mitochondrial membrane with ubiquinol-cytochrome c oxidoreductase (cytochrome b-c1 complex, complex III, CIII). Cu cation is required as a cofactor.

It localises to the mitochondrion inner membrane. The enzyme catalyses 4 Fe(II)-[cytochrome c] + O2 + 8 H(+)(in) = 4 Fe(III)-[cytochrome c] + 2 H2O + 4 H(+)(out). In terms of biological role, component of the cytochrome c oxidase, the last enzyme in the mitochondrial electron transport chain which drives oxidative phosphorylation. The respiratory chain contains 3 multisubunit complexes succinate dehydrogenase (complex II, CII), ubiquinol-cytochrome c oxidoreductase (cytochrome b-c1 complex, complex III, CIII) and cytochrome c oxidase (complex IV, CIV), that cooperate to transfer electrons derived from NADH and succinate to molecular oxygen, creating an electrochemical gradient over the inner membrane that drives transmembrane transport and the ATP synthase. Cytochrome c oxidase is the component of the respiratory chain that catalyzes the reduction of oxygen to water. Electrons originating from reduced cytochrome c in the intermembrane space (IMS) are transferred via the dinuclear copper A center (CU(A)) of subunit 2 and heme A of subunit 1 to the active site in subunit 1, a binuclear center (BNC) formed by heme A3 and copper B (CU(B)). The BNC reduces molecular oxygen to 2 water molecules using 4 electrons from cytochrome c in the IMS and 4 protons from the mitochondrial matrix. The sequence is that of Cytochrome c oxidase subunit 2 (COII) from Artemia franciscana (Brine shrimp).